The following is a 220-amino-acid chain: UPF0758 protein CKO_05095 (220 aa).

Residues 98 to 220 (ALLSPEMTRE…YVSFAERGWI (123 aa)) form the MPN domain. 3 residues coordinate Zn(2+): His-169, His-171, and Asp-182. Positions 169 to 182 (HNHPSGCAEPSKAD) match the JAMM motif motif.

Belongs to the UPF0758 family. YicR subfamily.

The protein is UPF0758 protein CKO_05095 of Citrobacter koseri (strain ATCC BAA-895 / CDC 4225-83 / SGSC4696).